Here is a 384-residue protein sequence, read N- to C-terminus: Secreted LysM effector Blys7 (384 aa).

A signal peptide spans 1–18 (MQRHLLLGLAGLPALLSA). The 45-residue stretch at 27–71 (FATVAANGETCDSMAATWGLDTATFQSLNPKAKCPEVIGGEQYCV) folds into the LysM 1 domain. Residues 81–106 (EPTTAPATTSTQTTTTTTTEVTSTTV) show a composition bias toward low complexity. A disordered region spans residues 81 to 112 (EPTTAPATTSTQTTTTTTTEVTSTTVPGNGIT). The region spanning 127–173 (KFYFVNKGDNCADITARYNLDLSDFLEWNPKAGNSCSGLWANAYACV) is the LysM 2 domain. The segment at 183-206 (KPKPTSTSTKPPTATGNGIPTPLP) is disordered. Positions 186–195 (PTSTSTKPPT) are enriched in low complexity. A LysM 3 domain is found at 217 to 263 (KFYLVKPGETCADIASRNGVSLSDFLQWNPHAGNACSGLWANAYACL).

It belongs to the secreted LysM effector family.

In terms of biological role, might have a role in sequestration of chitin oligosaccharides (breakdown products of fungal cell walls that are released during invasion and act as triggers of host immunity) to dampen host defense. The sequence is that of Secreted LysM effector Blys7 from Beauveria bassiana (strain ARSEF 2860) (White muscardine disease fungus).